Here is a 140-residue protein sequence, read N- to C-terminus: Large ribosomal subunit protein uL16 (140 aa).

Over residues 1–14 (MLMPKKVKHRKQMK) the composition is skewed to basic residues. Residues 1-20 (MLMPKKVKHRKQMKGRMSGT) are disordered.

It belongs to the universal ribosomal protein uL16 family. As to quaternary structure, part of the 50S ribosomal subunit.

In terms of biological role, binds 23S rRNA and is also seen to make contacts with the A and possibly P site tRNAs. In Geotalea daltonii (strain DSM 22248 / JCM 15807 / FRC-32) (Geobacter daltonii), this protein is Large ribosomal subunit protein uL16.